The chain runs to 510 residues: Bifunctional pantoate ligase/cytidylate kinase (510 aa).

The pantoate--beta-alanine ligase stretch occupies residues 1–276 (MKKVIIRKTE…CGETRLIDHV (276 aa)). 29–36 (MGNLHNGH) serves as a coordination point for ATP. The active-site Proton donor is His-36. Gln-61 provides a ligand contact to (R)-pantoate. Gln-61 contacts beta-alanine. 150–153 (GEKD) is an ATP binding site. Gln-156 is a binding site for (R)-pantoate. Residue 187–190 (LSSR) coordinates ATP. Positions 277 to 510 (FLMKRRPIIA…DKIPKETEIK (234 aa)) are cytidylate kinase.

It in the N-terminal section; belongs to the pantothenate synthetase family. In the C-terminal section; belongs to the cytidylate kinase family. Type 1 subfamily.

The protein resides in the cytoplasm. It carries out the reaction (R)-pantoate + beta-alanine + ATP = (R)-pantothenate + AMP + diphosphate + H(+). The enzyme catalyses CMP + ATP = CDP + ADP. It catalyses the reaction dCMP + ATP = dCDP + ADP. It functions in the pathway cofactor biosynthesis; (R)-pantothenate biosynthesis; (R)-pantothenate from (R)-pantoate and beta-alanine: step 1/1. Functionally, catalyzes the condensation of pantoate with beta-alanine in an ATP-dependent reaction via a pantoyl-adenylate intermediate. In terms of biological role, catalyzes the transfer of a phosphate group from ATP to either CMP or dCMP to form CDP or dCDP and ADP, respectively. In Prochlorococcus marinus (strain MIT 9215), this protein is Bifunctional pantoate ligase/cytidylate kinase.